A 327-amino-acid polypeptide reads, in one-letter code: Zinc transport protein ZntB (327 aa).

At 1–273 the chain is on the cytoplasmic side; it reads MEAIKGSDVN…ARRTYTMSLM (273 aa). The chain crosses the membrane as a helical span at residues 274-294; that stretch reads AMVFLPSTFLTGLFGVNLGGI. Topologically, residues 295–300 are periplasmic; it reads PGGGWQ. Residues 301–321 form a helical membrane-spanning segment; that stretch reads FGFSIFCILLVVLIGGVALWL. Residues 322–327 are Cytoplasmic-facing; the sequence is HRSKWL.

Belongs to the CorA metal ion transporter (MIT) (TC 1.A.35) family.

The protein localises to the cell inner membrane. The catalysed reaction is Zn(2+)(out) + H(+)(out) = Zn(2+)(in) + H(+)(in). Zinc transporter. Acts as a Zn(2+):proton symporter, which likely mediates zinc ion uptake. The sequence is that of Zinc transport protein ZntB from Escherichia coli O8 (strain IAI1).